The chain runs to 174 residues: MSAAEADRWAWLLVLSFVFGCNVLRILLPSFSFFMSRVLQKDAEQESQMRAEIQGMKQELSTVNMMDEFARYARLERKINKMTDKLKTHVKARTAQLAKIKWVISVAFYILQAALMVSLIWKYYSVPVAVVPSKWITPLDRLVAFPTRVAGGVGITCWILVCNKVVAIVLHPFS.

The Lumenal portion of the chain corresponds to 1-8 (MSAAEADR). The chain crosses the membrane as a helical span at residues 9 to 29 (WAWLLVLSFVFGCNVLRILLP). The Cytoplasmic segment spans residues 30–99 (SFSFFMSRVL…VKARTAQLAK (70 aa)). The stretch at 39–94 (LQKDAEQESQMRAEIQGMKQELSTVNMMDEFARYARLERKINKMTDKLKTHVKART) forms a coiled coil. The interaction with GET3/TRC40 stretch occupies residues 39–97 (LQKDAEQESQMRAEIQGMKQELSTVNMMDEFARYARLERKINKMTDKLKTHVKARTAQL). A helical membrane pass occupies residues 100-120 (IKWVISVAFYILQAALMVSLI). Residues 121-148 (WKYYSVPVAVVPSKWITPLDRLVAFPTR) are Lumenal-facing. A helical membrane pass occupies residues 149–169 (VAGGVGITCWILVCNKVVAIV). Residues 170 to 174 (LHPFS) are Cytoplasmic-facing.

The protein belongs to the WRB/GET1 family. As to quaternary structure, component of the Golgi to ER traffic (GET) complex, which is composed of GET1/WRB, CAMLG/GET2 and GET3. Within the complex, GET1 and CAMLG form a heterotetramer which is stabilized by phosphatidylinositol binding and which binds to the GET3 homodimer. Interacts with CAMLG (via C-terminus). GET3 shows a higher affinity for CAMLG than for GET1.

It localises to the endoplasmic reticulum membrane. Its function is as follows. Required for the post-translational delivery of tail-anchored (TA) proteins to the endoplasmic reticulum. Together with CAMLG/GET2, acts as a membrane receptor for soluble GET3/TRC40, which recognizes and selectively binds the transmembrane domain of TA proteins in the cytosol. Required to ensure correct topology and ER insertion of CAMLG. In Bos taurus (Bovine), this protein is Guided entry of tail-anchored proteins factor 1.